We begin with the raw amino-acid sequence, 642 residues long: MPVITLPDGSQRHYDHAVSPMDVALDIGPGLAKACIAGRVNGELVDACDLIENDAQLSIITAKDEEGLEIIRHSCAHLLGHAIKQLWPHTKMAIGPVIDNGFYYDVDLDRTLTQEDVEALEKRMHELAEKNYDVIKKKVSWHAARETFANRGESYKVSILDENIAHDDKPGLYFHEEYVDMCRGPHVPNMRFCHHFKLMKTAGAYWRGDSNNKMLQRIYGTAWADKKALNAYLQRLEEAAKRDHRKIGKQLDLYHMQEEAPGMVFWHNDGWTIFRELEVFVRSKLKEYQYQEVKGPFMMDRVLWEKTGHWDNYKDAMFTTSSENREYCIKPMNCPGHVQIFNQGLKSYRDLPLRMAEFGSCHRNEPSGSLHGLMRVRGFTQDDAHIFCTEEQIRDEVNGCIRLVYDMYSTFGFEKIVVKLSTRPEKRIGSDEMWDRAEADLAVALEENNIPFEYQLGEGAFYGPKIEFTLYDCLDRAWQCGTVQLDFSLPSRLSASYVGEDNERKVPVMIHRAILGSMERFIGILTEEFAGFFPTWLAPVQVVIMNITDSQSEYVNELTQKLSNAGIRVKADLRNEKIGFKIREHTLRRVPYMLVCGDKEVESGKVAVRTRRGKDLGSMDVNEVIEKLQQEIRSRSLKQLEE.

Residues 1-61 form the TGS domain; the sequence is MPVITLPDGS…ENDAQLSIIT (61 aa). The interval 243-534 is catalytic; it reads DHRKIGKQLD…LTEEFAGFFP (292 aa). Lysine 286 is subject to N6-acetyllysine. 3 residues coordinate Zn(2+): cysteine 334, histidine 385, and histidine 511.

It belongs to the class-II aminoacyl-tRNA synthetase family. In terms of assembly, homodimer. It depends on Zn(2+) as a cofactor.

It is found in the cytoplasm. It carries out the reaction tRNA(Thr) + L-threonine + ATP = L-threonyl-tRNA(Thr) + AMP + diphosphate + H(+). Its function is as follows. Catalyzes the attachment of threonine to tRNA(Thr) in a two-step reaction: L-threonine is first activated by ATP to form Thr-AMP and then transferred to the acceptor end of tRNA(Thr). Also edits incorrectly charged L-seryl-tRNA(Thr). The protein is Threonine--tRNA ligase of Shigella boydii serotype 18 (strain CDC 3083-94 / BS512).